Here is a 367-residue protein sequence, read N- to C-terminus: Choline-phosphate cytidylyltransferase A (367 aa).

Methionine 1 is subject to N-acetylmethionine. A disordered region spans residues 1 to 32 (MDAQSSAKVNSRKRRKEAPGPNGATEEDGIPS). Position 8 is an N6-acetyllysine (lysine 8). Residues isoleucine 84, phenylalanine 85, histidine 92, and lysine 122 each coordinate CTP. Phosphocholine contacts are provided by lysine 122 and tryptophan 151. Positions 168, 169, 173, 195, 196, 197, and 200 each coordinate CTP. Amphipathic stretches follow at residues 228 to 287 (KELN…EFIG) and 298 to 315 (ALKH…QAIS). Serine 233 carries the phosphoserine modification. Residues 272–293 (IDLIQKWEEKSREFIGSFLEMF) are autoinhibitory (AI). The interval 313–367 (AISPKQSPSSSPTHERSPSPSFRWPFSGKTSPSSSPASLSRCRAVTCDISEDEED) is disordered. Residues serine 315, serine 319, serine 321, serine 322, and serine 323 each carry the phosphoserine modification. The segment covering 315–324 (SPKQSPSSSP) has biased composition (polar residues). The stretch at 319–324 (SPSSSP) is repeat 1. A 3 X repeats region spans residues 319–348 (SPSSSPTHERSPSPSFRWPFSGKTSPSSSP). At threonine 325 the chain carries Phosphothreonine. Serine 329, serine 331, and serine 333 each carry phosphoserine. One copy of the 2; approximate repeat lies at 329-333 (SPSPS). Over residues 330 to 352 (PSPSFRWPFSGKTSPSSSPASLS) the composition is skewed to low complexity. Position 342 is a phosphothreonine (threonine 342). Phosphoserine is present on residues serine 343, serine 345, serine 346, serine 347, serine 350, and serine 352. The stretch at 343 to 348 (SPSSSP) is repeat 3. Threonine 358 is subject to Phosphothreonine. Serine 362 carries the post-translational modification Phosphoserine.

This sequence belongs to the cytidylyltransferase family. In terms of assembly, homodimer. The serine residues of the C-terminus are phosphorylated. The inactive soluble form is stabilized by phosphorylation, the active membrane bound form is promoted by anionic lipids or diacylglycerol, and is stabilized by dephosphorylation. In terms of processing, monoubiquitinated by the SCF(FBXL2) complex, leading to proteasomal degradation. In terms of tissue distribution, brain and liver (at protein level). Also found in heart, kidney, spleen, lung, skeletal muscle, ovary and testis.

The protein localises to the cytoplasm. It is found in the cytosol. Its subcellular location is the membrane. It localises to the endoplasmic reticulum membrane. The protein resides in the nucleus. It catalyses the reaction phosphocholine + CTP + H(+) = CDP-choline + diphosphate. The protein operates within phospholipid metabolism; phosphatidylcholine biosynthesis; phosphatidylcholine from phosphocholine: step 1/2. Interconverts between an inactive cytosolic form and an active membrane-bound form. Activation involves disruption of an inhibitory interaction between helices at the base of the active site and the autoinhibitory (AI) region. In terms of biological role, catalyzes the key rate-limiting step in the CDP-choline pathway for phosphatidylcholine biosynthesis. This Mus musculus (Mouse) protein is Choline-phosphate cytidylyltransferase A (Pcyt1a).